The primary structure comprises 663 residues: Pescadillo homolog (663 aa).

The span at Gln311 to Glu321 shows a compositional bias: basic and acidic residues. 3 disordered regions span residues Gln311–Ser360, Thr428–Gln447, and Ala504–Ala663. Over residues Thr322 to Lys334 the composition is skewed to acidic residues. The 117-residue stretch at Asp361 to Pro477 folds into the BRCT domain. Positions Pro501–Ala663 form a coiled coil. The segment covering Asp526–Glu567 has biased composition (acidic residues). Residues Val591 to Lys620 are compositionally biased toward basic and acidic residues.

It belongs to the pescadillo family. In terms of assembly, component of the NOP7 complex, composed of erb1, nop7 and ytm1. The complex is held together by erb1, which interacts with nop7 via its N-terminal domain and with ytm1 via a high-affinity interaction between the seven-bladed beta-propeller domains of the 2 proteins. The NOP7 complex associates with the 66S pre-ribosome.

The protein localises to the nucleus. It localises to the nucleolus. It is found in the nucleoplasm. In terms of biological role, component of the NOP7 complex, which is required for maturation of the 25S and 5.8S ribosomal RNAs and formation of the 60S ribosome. The protein is Pescadillo homolog (nop7) of Neurospora crassa (strain ATCC 24698 / 74-OR23-1A / CBS 708.71 / DSM 1257 / FGSC 987).